The sequence spans 535 residues: CTP synthase (535 aa).

An amidoligase domain region spans residues 1 to 270; it reads MSKNTKYVFV…DRLVCEKLGL (270 aa). Residue Ser-16 participates in CTP binding. Residue Ser-16 participates in UTP binding. 17-22 is an ATP binding site; that stretch reads SLGKGI. Position 57 (Tyr-57) interacts with L-glutamine. Asp-74 lines the ATP pocket. Mg(2+) is bound by residues Asp-74 and Glu-144. Residues 151–153, 191–196, and Lys-227 each bind CTP; these read DIE and KTKPTQ. UTP contacts are provided by residues 191-196 and Lys-227; that span reads KTKPTQ. Positions 295 to 535 constitute a Glutamine amidotransferase type-1 domain; that stretch reads KIALVGKYVE…GFVGAALNNK (241 aa). Residue Gly-357 coordinates L-glutamine. Cys-384 (nucleophile; for glutamine hydrolysis) is an active-site residue. Residues 385 to 388, Glu-408, and Arg-465 each bind L-glutamine; that span reads LGMQ. Residues His-510 and Glu-512 contribute to the active site.

Belongs to the CTP synthase family. As to quaternary structure, homotetramer.

The enzyme catalyses UTP + L-glutamine + ATP + H2O = CTP + L-glutamate + ADP + phosphate + 2 H(+). The catalysed reaction is L-glutamine + H2O = L-glutamate + NH4(+). It carries out the reaction UTP + NH4(+) + ATP = CTP + ADP + phosphate + 2 H(+). The protein operates within pyrimidine metabolism; CTP biosynthesis via de novo pathway; CTP from UDP: step 2/2. With respect to regulation, allosterically activated by GTP, when glutamine is the substrate; GTP has no effect on the reaction when ammonia is the substrate. The allosteric effector GTP functions by stabilizing the protein conformation that binds the tetrahedral intermediate(s) formed during glutamine hydrolysis. Inhibited by the product CTP, via allosteric rather than competitive inhibition. Catalyzes the ATP-dependent amination of UTP to CTP with either L-glutamine or ammonia as the source of nitrogen. Regulates intracellular CTP levels through interactions with the four ribonucleotide triphosphates. The protein is CTP synthase of Clostridium perfringens (strain ATCC 13124 / DSM 756 / JCM 1290 / NCIMB 6125 / NCTC 8237 / Type A).